A 201-amino-acid polypeptide reads, in one-letter code: Myelomonocytic growth factor (201 aa).

Positions 1–23 (MCCLTPVLALALVLGAPWQALHG) are cleaved as a signal peptide. Disulfide bonds link Cys-61–Cys-67 and Cys-89–Cys-99. Residues Asn-123 and Asn-137 are each glycosylated (N-linked (GlcNAc...) asparagine).

Belongs to the IL-6 superfamily.

The protein localises to the secreted. Hematopoietic growth factor that stimulates the proliferation and colony formation of normal and transformed avian cells of the myeloid lineage. This is Myelomonocytic growth factor from Gallus gallus (Chicken).